We begin with the raw amino-acid sequence, 403 residues long: tRNA pseudouridine synthase 4 (403 aa).

The Nucleophile role is filled by Asp75.

The protein belongs to the pseudouridine synthase TruB family.

The protein resides in the nucleus. The protein localises to the mitochondrion. The catalysed reaction is uridine(55) in tRNA = pseudouridine(55) in tRNA. It catalyses the reaction a uridine in mRNA = a pseudouridine in mRNA. Responsible for synthesis of pseudouridine from uracil-55 in the psi GC loop of transfer RNAs. Also catalyzes pseudouridylation of mRNAs with the consensus sequence 5'-GGUUCRA-3'. The polypeptide is tRNA pseudouridine synthase 4 (PUS4) (Saccharomyces cerevisiae (strain ATCC 204508 / S288c) (Baker's yeast)).